The chain runs to 116 residues: Omega-ctenitoxin-Pn3a (116 aa).

A signal peptide spans 1–19 (MKMKLLGIILLVSFPFVLG). Positions 20 to 38 (FAGIPIEEGENSVEVGEVE) are excised as a propeptide. 7 disulfides stabilise this stretch: cysteine 41–cysteine 58, cysteine 48–cysteine 64, cysteine 55–cysteine 90, cysteine 57–cysteine 78, cysteine 66–cysteine 76, cysteine 96–cysteine 102, and cysteine 106–cysteine 111. The residue at position 115 (histidine 115) is a Histidine amide.

It belongs to the neurotoxin 04 (omega-agtx) family. 03 (type II/III omega-agtx) subfamily. As to expression, expressed by the venom gland.

It is found in the secreted. Functionally, this toxin is a potent and practically irreversible antagonist of both Cav2.1/CACNA1A and Cav2.2/CACNA1B calcium channels, while it displays a partial and rapidly reversible block of Cav2.3/CACNA1E calcium channels and no effect on Cav3/CACNA1 calcium channels. Inhibits glutamate uptake from rat brain synaptosomes by an interaction between cysteines from both glutamate transporter and toxin. Blocks potassium-induced exocytosis of synaptic vesicles in brain cortical synaptosomes (IC(50)=1.1 nM). In rat brain, inhibits glutamate release, neuronal death and loss of neurotransmission in the hippocampus resulting from ischemia. In vivo, induces rapid general flaccid paralysis followed by death in 10-30 minutes at dose levels of 5 ug per mouse. The protein is Omega-ctenitoxin-Pn3a of Phoneutria nigriventer (Brazilian armed spider).